A 355-amino-acid chain; its full sequence is Ion-translocating oxidoreductase complex subunit D (355 aa).

The next 4 helical transmembrane spans lie at tryptophan 23–threonine 43, leucine 44–phenylalanine 64, alanine 78–alanine 109, and valine 129–isoleucine 149. Position 194 is an FMN phosphoryl threonine (threonine 194). 5 helical membrane-spanning segments follow: residues phenylalanine 221–leucine 241, isoleucine 250–proline 270, threonine 273–alanine 293, isoleucine 307–proline 327, and aspartate 328–threonine 348.

It belongs to the NqrB/RnfD family. As to quaternary structure, the complex is composed of six subunits: RnfA, RnfB, RnfC, RnfD, RnfE and RnfG. FMN is required as a cofactor.

The protein localises to the cell inner membrane. Part of a membrane-bound complex that couples electron transfer with translocation of ions across the membrane. The chain is Ion-translocating oxidoreductase complex subunit D from Vibrio vulnificus (strain CMCP6).